Consider the following 487-residue polypeptide: V-type proton ATPase subunit B2 (487 aa).

An N-acetylglycine modification is found at glycine 2.

The protein belongs to the ATPase alpha/beta chains family. In terms of assembly, V-ATPase is a heteromultimeric enzyme composed of a peripheral catalytic V1 complex (components A to H) attached to an integral membrane V0 proton pore complex (components: a, c, c'', d and e).

The protein resides in the vacuole membrane. Functionally, non-catalytic subunit of the peripheral V1 complex of vacuolar ATPase. V-ATPase is responsible for acidifying a variety of intracellular compartments in eukaryotic cells. The polypeptide is V-type proton ATPase subunit B2 (VHA-B2) (Arabidopsis thaliana (Mouse-ear cress)).